Here is an 898-residue protein sequence, read N- to C-terminus: Interleukin enhancer-binding factor 3 (898 aa).

A DZF domain is found at 5-378; the sequence is RIFVNDDRHV…PMKRPMEEDG (374 aa). The disordered stretch occupies residues 52 to 85; it reads QEKGNSELSEAENMDTPPDDESKEGAGEQKAEHM. Over residues 60-73 the composition is skewed to acidic residues; the sequence is SEAENMDTPPDDES. Thr-67 bears the Phosphothreonine mark. A compositionally biased stretch (basic and acidic residues) spans 74-85; it reads KEGAGEQKAEHM. Residue Lys-100 is modified to N6-acetyllysine. Phosphothreonine; by PKR is present on Thr-188. Ser-190 carries the post-translational modification Phosphoserine. Residue Lys-297 forms a Glycyl lysine isopeptide (Lys-Gly) (interchain with G-Cter in ubiquitin) linkage. At Thr-315 the chain carries Phosphothreonine; by PKR. Lys-348 participates in a covalent cross-link: Glycyl lysine isopeptide (Lys-Gly) (interchain with G-Cter in SUMO1). Positions 363 to 402 are disordered; the sequence is TTYAITPMKRPMEEDGEEKSPSKKKKKIQKKEEKADPPQA. The Bipartite nuclear localization signal signature appears at 371 to 389; that stretch reads KRPMEEDGEEKSPSKKKKK. Residues 372–383 show a composition bias toward basic and acidic residues; that stretch reads RPMEEDGEEKSP. Phosphoserine is present on residues Ser-382 and Ser-384. Residue Lys-396 forms a Glycyl lysine isopeptide (Lys-Gly) (interchain with G-Cter in SUMO2) linkage. The region spanning 398-467 is the DRBM 1 domain; sequence DPPQAMNALM…AVKVLQDMGL (70 aa). Position 460 is an N6-acetyllysine (Lys-460). Disordered stretches follow at residues 466–495 and 505–524; these read GLPT…IVAP and PSSV…LTKH. Positions 472–481 are enriched in basic and acidic residues; it reads EGRDSSKGED. 4 positions are modified to phosphoserine: Ser-476, Ser-477, Ser-482, and Ser-486. Lys-489 is covalently cross-linked (Glycyl lysine isopeptide (Lys-Gly) (interchain with G-Cter in SUMO2)). Positions 524-590 constitute a DRBM 2 domain; that stretch reads HGKNPVMELN…ALAALEKLFP (67 aa). Residue Thr-592 is modified to Phosphothreonine. Positions 609 to 898 are interaction with PRMT1; it reads RGGPKFAAKP…TEHSMNYQYR (290 aa). Disordered regions lie at residues 631–661 and 719–898; these read NEVP…GGAN and QGDS…YQYR. Gly residues predominate over residues 644–661; that stretch reads RGGNIRGRGRGRGFGGAN. Composition is skewed to low complexity over residues 745–769, 783–794, and 802–812; these read SYSS…SSYG, GSYSSYSNSYNS, and DYSYDSKFNYS. 4 positions are modified to phosphoserine: Ser-794, Ser-812, Ser-814, and Ser-818. Gly residues predominate over residues 813–822; that stretch reads GSGGRSGGNS. Over residues 823 to 834 the composition is skewed to low complexity; sequence YGSSGSSSYNTG. Positions 835 to 845 are enriched in gly residues; sequence SHGGYGTGSGG. Low complexity predominate over residues 846–886; it reads SSSYQGKQGGYSSQSNYSSPGSSQSYSGPASSYQSSQGGYS.

As to quaternary structure, identified in a IGF2BP1-dependent mRNP granule complex containing untranslated mRNAs. Interacts with FUS and SMN. Interacts (via C-terminus) with PRMT1. Forms a complex with ILF2. Can also bind to PRKDC/XRCC7: this may stabilize the interaction of PRKDC/XRCC7 and the heterodimeric complex of XRCC6/KU70 and XRCC5/KU80. Forms a heteromeric complex with ZNF346 and ILF3. Found in a nuclear export complex with XPO5, ILF3, Ran and double-stranded RNA or double-stranded minihelix VA1 RNA. Found in a nuclear export complex with XPO5, RAN, ILF3, ZNF346 and double-stranded RNA. Interacts with XPO5 and ZNF346. Forms a complex with ILF2, YLPM1, KHDRBS1, RBMX, NCOA5 and PPP1CA. Interacts with AGO1 and AGO2. Interacts with DHX36; this interaction occurs in a RNA-dependent manner. Interacts with ELAVL1; this interaction occurs in a RNA-dependent manner. Interacts with HAVCR2; this interaction promotes ILF3 ubiquitination and subsequent degradation. Post-translationally, phosphorylated at Thr-188 and Thr-315 by PKR in response to RNA viruses. This phosphorylation results in the dissociation of ILF2 from the ILF2-ILF3 complex resulting in a cytoplasmic sequestration of ILF3 where it can bind to viral RNAs and impede viral replication. Methylated by protein arginine N-methyltransferase 1. Ubiquitous. Expressed at high levels in the thymus, testis, ovary and at lower levelss in the spleen.

The protein localises to the nucleus. The protein resides in the nucleolus. It localises to the cytoplasm. In terms of biological role, RNA-binding protein that plays an essential role in the biogenesis of circular RNAs (circRNAs) which are produced by back-splicing circularization of pre-mRNAs. Within the nucleus, promotes circRNAs processing by stabilizing the regulatory elements residing in the flanking introns of the circularized exons. Plays thereby a role in the back-splicing of a subset of circRNAs. As a consequence, participates in a wide range of transcriptional and post-transcriptional processes. Binds to poly-U elements and AU-rich elements (AREs) in the 3'-UTR of target mRNAs. Upon viral infection, ILF3 accumulates in the cytoplasm and participates in the innate antiviral response. Mechanistically, ILF3 becomes phosphorylated and activated by the double-stranded RNA-activated protein kinase/PKR which releases ILF3 from cellular mature circRNAs. In turn, unbound ILF3 molecules are able to interact with and thus inhibit viral mRNAs. This chain is Interleukin enhancer-binding factor 3 (Ilf3), found in Mus musculus (Mouse).